Consider the following 447-residue polypeptide: Pup--protein ligase 2 (447 aa).

E4 serves as a coordination point for Mg(2+). R48 contributes to the ATP binding site. Y50 contributes to the Mg(2+) binding site. The active-site Proton acceptor is the D52. A Mg(2+)-binding site is contributed by E58. Residues T61 and W414 each contribute to the ATP site.

This sequence belongs to the Pup ligase/Pup deamidase family. Pup-conjugating enzyme subfamily.

The enzyme catalyses ATP + [prokaryotic ubiquitin-like protein]-L-glutamate + [protein]-L-lysine = ADP + phosphate + N(6)-([prokaryotic ubiquitin-like protein]-gamma-L-glutamyl)-[protein]-L-lysine.. Its pathway is protein degradation; proteasomal Pup-dependent pathway. It functions in the pathway protein modification; protein pupylation. Its function is as follows. Catalyzes the covalent attachment of the prokaryotic ubiquitin-like protein modifier Pup to the proteasomal substrate proteins, thereby targeting them for proteasomal degradation. This tagging system is termed pupylation. The ligation reaction involves the side-chain carboxylate of the C-terminal glutamate of Pup and the side-chain amino group of a substrate lysine. The protein is Pup--protein ligase 2 of Rhodococcus erythropolis (Arthrobacter picolinophilus).